An 81-amino-acid polypeptide reads, in one-letter code: Small ribosomal subunit protein bS16 (81 aa).

It belongs to the bacterial ribosomal protein bS16 family.

The polypeptide is Small ribosomal subunit protein bS16 (Caldicellulosiruptor bescii (strain ATCC BAA-1888 / DSM 6725 / KCTC 15123 / Z-1320) (Anaerocellum thermophilum)).